The chain runs to 301 residues: MHKKNRHNQGYNFTALVKAHPGLLQFIIKNQYNNQDTIDFANPQAVKALNLSLLKSEYHVKFWDIPDGYLCPAIPGRVDYIHHLQDLLAATPKTLLPNKTPINVLDIGTGASCIYPILGQREYDWHFVASDVDPISIKVAKHIISSDKSLNRNINCRLQPNSNQIFNGIIAEDEFYHLTICNPPFHSSLAEASKGTARKIKNLNKGNHSSKNQDKTLNFGGQKAELWCPGGELAFIGKMIKESKAYQKQVLWFTCLVSKKDHLSKLKLSLKKSDAKQIKVIDMAQGQKISRFIAWSFYDVN.

It belongs to the methyltransferase superfamily. METTL16/RlmF family.

It localises to the cytoplasm. It carries out the reaction adenosine(1618) in 23S rRNA + S-adenosyl-L-methionine = N(6)-methyladenosine(1618) in 23S rRNA + S-adenosyl-L-homocysteine + H(+). Functionally, specifically methylates the adenine in position 1618 of 23S rRNA. In Colwellia psychrerythraea (strain 34H / ATCC BAA-681) (Vibrio psychroerythus), this protein is Ribosomal RNA large subunit methyltransferase F.